A 750-amino-acid chain; its full sequence is uncharacterized protein (750 aa).

This is an uncharacterized protein from Escherichia coli (strain K12).